Consider the following 360-residue polypeptide: Phospho-N-acetylmuramoyl-pentapeptide-transferase (360 aa).

10 helical membrane-spanning segments follow: residues 27–47, 71–91, 93–113, 128–148, 168–188, 199–219, 239–259, 262–282, 288–308, and 337–357; these read GAMI…INSL, TPTM…LLWA, LASV…AIGF, FSGK…AFTI, LVIN…VGAG, GLAI…AYLS, LAVV…FNAP, AIFM…TVAV, IVLA…IIQV, and QVVI…LSTL.

This sequence belongs to the glycosyltransferase 4 family. MraY subfamily. It depends on Mg(2+) as a cofactor.

Its subcellular location is the cell inner membrane. It catalyses the reaction UDP-N-acetyl-alpha-D-muramoyl-L-alanyl-gamma-D-glutamyl-meso-2,6-diaminopimeloyl-D-alanyl-D-alanine + di-trans,octa-cis-undecaprenyl phosphate = di-trans,octa-cis-undecaprenyl diphospho-N-acetyl-alpha-D-muramoyl-L-alanyl-D-glutamyl-meso-2,6-diaminopimeloyl-D-alanyl-D-alanine + UMP. Its pathway is cell wall biogenesis; peptidoglycan biosynthesis. Functionally, catalyzes the initial step of the lipid cycle reactions in the biosynthesis of the cell wall peptidoglycan: transfers peptidoglycan precursor phospho-MurNAc-pentapeptide from UDP-MurNAc-pentapeptide onto the lipid carrier undecaprenyl phosphate, yielding undecaprenyl-pyrophosphoryl-MurNAc-pentapeptide, known as lipid I. The chain is Phospho-N-acetylmuramoyl-pentapeptide-transferase from Brucella abortus (strain S19).